Here is a 236-residue protein sequence, read N- to C-terminus: Adenosine 5'-phosphosulfate reductase (236 aa).

C123, C124, C206, and C209 together coordinate [4Fe-4S] cluster. C232 functions as the Nucleophile; cysteine thiosulfonate intermediate in the catalytic mechanism.

This sequence belongs to the PAPS reductase family. CysH subfamily. [4Fe-4S] cluster serves as cofactor.

It localises to the cytoplasm. The catalysed reaction is [thioredoxin]-disulfide + sulfite + AMP + 2 H(+) = adenosine 5'-phosphosulfate + [thioredoxin]-dithiol. The protein operates within sulfur metabolism; hydrogen sulfide biosynthesis; sulfite from sulfate. Functionally, catalyzes the formation of sulfite from adenosine 5'-phosphosulfate (APS) using thioredoxin as an electron donor. The polypeptide is Adenosine 5'-phosphosulfate reductase (Streptomyces coelicolor (strain ATCC BAA-471 / A3(2) / M145)).